A 203-amino-acid polypeptide reads, in one-letter code: Large ribosomal subunit protein bL25 (203 aa).

The protein belongs to the bacterial ribosomal protein bL25 family. CTC subfamily. In terms of assembly, part of the 50S ribosomal subunit; part of the 5S rRNA/L5/L18/L25 subcomplex. Contacts the 5S rRNA. Binds to the 5S rRNA independently of L5 and L18.

This is one of the proteins that binds to the 5S RNA in the ribosome where it forms part of the central protuberance. The chain is Large ribosomal subunit protein bL25 from Rickettsia prowazekii (strain Madrid E).